We begin with the raw amino-acid sequence, 273 residues long: Terpene cyclase ascF (273 aa).

The next 7 helical transmembrane spans lie at 18-38 (VYEA…ILIA), 49-69 (MPLF…LWVV), 78-98 (MTIW…HGVL), 113-133 (ILVG…SWWI), 153-173 (YWAV…MLCV), 178-198 (GGVS…GLNM), and 217-237 (APAV…GFVL).

It belongs to the paxB family.

The protein resides in the membrane. The catalysed reaction is ilicicolin A epoxide = ilicicolin C. The protein operates within secondary metabolite biosynthesis; terpenoid biosynthesis. Terpene cyclase; part of the asc-1 gene cluster that mediates the biosynthesis of both ascochlorin and ascofuranone, a strong inhibitor of cyanide-insensitive alternative oxidases and a promising drug candidate against African trypanosomiasis. The first step in the pathway is performed by the non-reducing polyketide synthase ascC that produces orsellinic acid by condensing acetyl-CoA with 3 malonyl-CoA units. Orsellinic acid is then prenylated by the prenyltransferase ascA to yield ilicicolinic acid B. Ilicicolinic acid B is further reduced to ilicicolin B by the reductase ascB. The halogenase ascD then chlorinates ilicicolin B to produce ilicicolin A which is converted to ilicicolin A epoxide by the cytochrome P450 monooxygenase ascE that catalyzes stereoselective epoxidation of the terminal double bond of the prenyl group. Ilicicolin A epoxide is the last common precursor for the biosynthesis of ascofuranone and ascochlorin. The terpene cyclase ascF produces a monocyclic terpene, and the cyclization reaction is proposed to be initiated by protonation of the terminal epoxide of ilicicolin A epoxide to generate a monocyclic tertiarycation, which is followed by a series of hydride and methyl shifts with abstraction of proton, leading to the formation of the (14S,15R,19R)-trimethylcyclohexanone ring structure of ilicicolin C, which is finally reduced to ascochlorin by the dehydrogenase ascG. On the other hand, ilicicolin A epoxide is hydroxylated by the cytochrome P450 monooxygenase ascH, and the resultant product is cyclized by the terpene cyclase ascI to ascofuranol via protonation-initiated epoxide ring opening, which facilitates the 6-endo-tet cyclization to form the tetrahy-drofuran ring. Finally, ascofuranol is oxidized into ascofuranone by ascJ. The polypeptide is Terpene cyclase ascF (Acremonium egyptiacum (Oospora egyptiaca)).